The following is an 87-amino-acid chain: Dynein light chain 1, cytoplasmic (87 aa).

This sequence belongs to the dynein light chain family. In terms of assembly, homodimer. Cytoplasmic dynein consists of two catalytic heavy chains (HCs) and a number of non-catalytic subunits which present intermediate chains (ICs), light intermediate chains (LICs) and light chains (LCs). Component of the nuclear pore complex (NPC). NPC constitutes the exclusive means of nucleocytoplasmic transport. NPCs allow the passive diffusion of ions and small molecules and the active, nuclear transport receptor-mediated bidirectional transport of macromolecules such as proteins, RNAs, ribonucleoparticles (RNPs), and ribosomal subunits across the nuclear envelope. Due to its 8-fold rotational symmetry, all subunits are present with 8 copies or multiples thereof.

It is found in the cytoplasm. The protein localises to the cytoskeleton. Its subcellular location is the nucleus. It localises to the nuclear pore complex. Acts as one of several non-catalytic accessory components of the cytoplasmic dynein complex that are thought to be involved in linking dynein to cargos and to adapter proteins that regulate dynein function. Cytoplasmic dynein 1 acts as a motor for the intracellular retrograde motility of vesicles and organelles along microtubules. May play a role in changing or maintaining the spatial distribution of cytoskeletal structures. Also a component of the nuclear pore complex. The chain is Dynein light chain 1, cytoplasmic (DYN2) from Kluyveromyces lactis (strain ATCC 8585 / CBS 2359 / DSM 70799 / NBRC 1267 / NRRL Y-1140 / WM37) (Yeast).